The primary structure comprises 712 residues: Phosphomethylpyrimidine synthase (712 aa).

The disordered stretch occupies residues 14-49; the sequence is AIDITAPESTIPNKSKVPNKSAESSQSTVPKAPSRR. Over residues 20 to 42 the composition is skewed to polar residues; that stretch reads PESTIPNKSKVPNKSAESSQSTV. Residues Asn-283, Met-312, Tyr-341, His-377, 397 to 399, 438 to 441, and Glu-477 contribute to the substrate site; these read SRG and DGMR. His-481 is a Zn(2+) binding site. Residue Tyr-504 participates in substrate binding. Position 545 (His-545) interacts with Zn(2+). [4Fe-4S] cluster-binding residues include Cys-625, Cys-628, and Cys-633.

Belongs to the ThiC family. Homodimer. [4Fe-4S] cluster is required as a cofactor.

It carries out the reaction 5-amino-1-(5-phospho-beta-D-ribosyl)imidazole + S-adenosyl-L-methionine = 4-amino-2-methyl-5-(phosphooxymethyl)pyrimidine + CO + 5'-deoxyadenosine + formate + L-methionine + 3 H(+). The protein operates within cofactor biosynthesis; thiamine diphosphate biosynthesis. Functionally, catalyzes the synthesis of the hydroxymethylpyrimidine phosphate (HMP-P) moiety of thiamine from aminoimidazole ribotide (AIR) in a radical S-adenosyl-L-methionine (SAM)-dependent reaction. This chain is Phosphomethylpyrimidine synthase, found in Shewanella putrefaciens (strain CN-32 / ATCC BAA-453).